The primary structure comprises 70 residues: ATP synthase subunit c (70 aa).

A run of 2 helical transmembrane segments spans residues 4–24 (IAAA…NGLI) and 45–65 (LMFI…VIAF).

The protein belongs to the ATPase C chain family. F-type ATPases have 2 components, F(1) - the catalytic core - and F(0) - the membrane proton channel. F(1) has five subunits: alpha(3), beta(3), gamma(1), delta(1), epsilon(1). F(0) has three main subunits: a(1), b(2) and c(10-14). The alpha and beta chains form an alternating ring which encloses part of the gamma chain. F(1) is attached to F(0) by a central stalk formed by the gamma and epsilon chains, while a peripheral stalk is formed by the delta and b chains.

Its subcellular location is the cell membrane. Functionally, f(1)F(0) ATP synthase produces ATP from ADP in the presence of a proton or sodium gradient. F-type ATPases consist of two structural domains, F(1) containing the extramembraneous catalytic core and F(0) containing the membrane proton channel, linked together by a central stalk and a peripheral stalk. During catalysis, ATP synthesis in the catalytic domain of F(1) is coupled via a rotary mechanism of the central stalk subunits to proton translocation. The chain is ATP synthase subunit c from Bacillus pumilus (strain SAFR-032).